Reading from the N-terminus, the 113-residue chain is Large ribosomal subunit protein eL31B (113 aa).

Belongs to the eukaryotic ribosomal protein eL31 family. Component of the large ribosomal subunit (LSU). Mature yeast ribosomes consist of a small (40S) and a large (60S) subunit. The 40S small subunit contains 1 molecule of ribosomal RNA (18S rRNA) and 33 different proteins (encoded by 57 genes). The large 60S subunit contains 3 rRNA molecules (25S, 5.8S and 5S rRNA) and 46 different proteins (encoded by 81 genes).

The protein resides in the cytoplasm. In terms of biological role, component of the ribosome, a large ribonucleoprotein complex responsible for the synthesis of proteins in the cell. The small ribosomal subunit (SSU) binds messenger RNAs (mRNAs) and translates the encoded message by selecting cognate aminoacyl-transfer RNA (tRNA) molecules. The large subunit (LSU) contains the ribosomal catalytic site termed the peptidyl transferase center (PTC), which catalyzes the formation of peptide bonds, thereby polymerizing the amino acids delivered by tRNAs into a polypeptide chain. The nascent polypeptides leave the ribosome through a tunnel in the LSU and interact with protein factors that function in enzymatic processing, targeting, and the membrane insertion of nascent chains at the exit of the ribosomal tunnel. The protein is Large ribosomal subunit protein eL31B of Saccharomyces cerevisiae (strain ATCC 204508 / S288c) (Baker's yeast).